The sequence spans 277 residues: Inner kinetochore subunit sim4 (277 aa).

A coiled-coil region spans residues 96 to 138 (NNISDLKKNLHSNKKLEAVLKEELHQIKKFSSDLQSLKSSMGE).

The protein belongs to the CENP-K/MCM22 family. Component of the inner kinetochore constitutive centromere-associated network (CCAN) (also known as central kinetochore Sim4 complex in fission yeast), which is composed of at least cnl2, cnp3, cnp20, fta1, fta2, fta3, fta4, fta6, fta7, mal2, mhf1, mhf2, mis6, mis15, mis17, sim4 and wip1. Interacts with mis6 and dad1.

The protein localises to the nucleus. It is found in the chromosome. The protein resides in the centromere. Functionally, component of the kinetochore, a multiprotein complex that assembles on centromeric DNA and attaches chromosomes to spindle microtubules, mediating chromosome segregation and sister chromatid segregation during meiosis and mitosis. Component of the inner kinetochore constitutive centromere-associated network (CCAN), which serves as a structural platform for outer kinetochore assembly. This is Inner kinetochore subunit sim4 (sim4) from Schizosaccharomyces pombe (strain 972 / ATCC 24843) (Fission yeast).